Here is a 489-residue protein sequence, read N- to C-terminus: uncharacterized protein (489 aa).

A run of 12 helical transmembrane segments spans residues 14 to 34 (LLFV…ISLF), 36 to 56 (LGPF…IVTL), 100 to 120 (IIGP…FSGI), 127 to 147 (LVNT…LAFI), 158 to 178 (LIAL…IVAI), 203 to 223 (EISF…YAGV), 241 to 261 (ILIV…IILN), 286 to 306 (AAGL…NVST), 344 to 364 (IWFT…IPLV), 380 to 400 (VGSA…FKFI), 419 to 439 (LFCL…FPVI), and 449 to 469 (HTLT…LFLL).

To M.genitalium MG226.

The protein localises to the cell membrane. This is an uncharacterized protein from Mycoplasma genitalium (strain ATCC 33530 / DSM 19775 / NCTC 10195 / G37) (Mycoplasmoides genitalium).